The sequence spans 107 residues: uncharacterized protein (107 aa).

This is an uncharacterized protein from Dictyostelium discoideum (Social amoeba).